The sequence spans 103 residues: Large ribosomal subunit protein bL21 (103 aa).

Belongs to the bacterial ribosomal protein bL21 family. Part of the 50S ribosomal subunit. Contacts protein L20.

Its function is as follows. This protein binds to 23S rRNA in the presence of protein L20. The sequence is that of Large ribosomal subunit protein bL21 from Kocuria rhizophila (strain ATCC 9341 / DSM 348 / NBRC 103217 / DC2201).